The primary structure comprises 478 residues: Probable glycine dehydrogenase (decarboxylating) subunit 2 (478 aa).

Lys-264 bears the N6-(pyridoxal phosphate)lysine mark.

It belongs to the GcvP family. C-terminal subunit subfamily. In terms of assembly, the glycine cleavage system is composed of four proteins: P, T, L and H. In this organism, the P 'protein' is a heterodimer of two subunits. Pyridoxal 5'-phosphate is required as a cofactor.

The enzyme catalyses N(6)-[(R)-lipoyl]-L-lysyl-[glycine-cleavage complex H protein] + glycine + H(+) = N(6)-[(R)-S(8)-aminomethyldihydrolipoyl]-L-lysyl-[glycine-cleavage complex H protein] + CO2. In terms of biological role, the glycine cleavage system catalyzes the degradation of glycine. The P protein binds the alpha-amino group of glycine through its pyridoxal phosphate cofactor; CO(2) is released and the remaining methylamine moiety is then transferred to the lipoamide cofactor of the H protein. The protein is Probable glycine dehydrogenase (decarboxylating) subunit 2 of Endomicrobium trichonymphae.